The sequence spans 355 residues: Transcription factor TCP13 (355 aa).

The disordered stretch occupies residues 1-57 (MNIVSWKDANDEVAGGATTRREREVKEDQEETEVRATSGKTVIKKQPTSISSSSSSW). Positions 74 to 132 (GKDRHSKVCTLRGLRDRRVRLSVPTAIQLYDLQERLGVDQPSKAVDWLLDAAKEEIDEL) constitute a TCP domain. Residues 329-355 (TNSTTTANMSRHLGSERCTSRGSDHHM) form a disordered region. Over residues 341 to 355 (LGSERCTSRGSDHHM) the composition is skewed to basic and acidic residues.

In terms of assembly, interacts with AHL27 and AHL29. Interacts with SPL. Interacts with KIN10; KIN11 and FLZ3. Expressed in cotyledons, particularly in the vascular region, in leaves, buds, flowers and immature siliques, and, to a lower extent, in roots.

The protein localises to the nucleus. It localises to the plastid. Its subcellular location is the chloroplast. Functionally, plays a pivotal role in the control of morphogenesis of shoot organs by negatively regulating the expression of boundary-specific genes such as CUC genes, probably through the induction of miRNA (e.g. miR164). Binds to the 3'-ACC-5' repeats in the light-responsive promoter (LRP) of psbD, and activates its transcription. Participates in ovule development. The chain is Transcription factor TCP13 (TCP13) from Arabidopsis thaliana (Mouse-ear cress).